Consider the following 167-residue polypeptide: Peptidyl-prolyl cis-trans isomerase-like 3 (167 aa).

One can recognise a PPIase cyclophilin-type domain in the interval 1-160 (MSVTLHTSHG…EPVRIENVTI (160 aa)).

It belongs to the cyclophilin-type PPIase family. PPIL3 subfamily.

The catalysed reaction is [protein]-peptidylproline (omega=180) = [protein]-peptidylproline (omega=0). PPIases accelerate the folding of proteins. It catalyzes the cis-trans isomerization of proline imidic peptide bonds in oligopeptides. The sequence is that of Peptidyl-prolyl cis-trans isomerase-like 3 (CYP10) from Gibberella zeae (strain ATCC MYA-4620 / CBS 123657 / FGSC 9075 / NRRL 31084 / PH-1) (Wheat head blight fungus).